Consider the following 346-residue polypeptide: Serine/threonine-protein phosphatase PP1(5.9) (346 aa).

Mn(2+) contacts are provided by Asp102, His104, Asp130, and Asn162. The active-site Proton donor is the His163. Mn(2+) is bound by residues His211 and His287.

It belongs to the PPP phosphatase family. PP-1 subfamily. Mn(2+) serves as cofactor.

The catalysed reaction is O-phospho-L-seryl-[protein] + H2O = L-seryl-[protein] + phosphate. The enzyme catalyses O-phospho-L-threonyl-[protein] + H2O = L-threonyl-[protein] + phosphate. The chain is Serine/threonine-protein phosphatase PP1(5.9) from Trypanosoma brucei brucei.